We begin with the raw amino-acid sequence, 487 residues long: Cysteine--tRNA ligase (487 aa).

Cys-27 is a binding site for Zn(2+). The short motif at 29–39 (VTVYDLCHIGH) is the 'HIGH' region element. Zn(2+) is bound by residues Cys-211, His-236, and Glu-240. Positions 268–272 (KMSKS) match the 'KMSKS' region motif. Residue Lys-271 participates in ATP binding.

This sequence belongs to the class-I aminoacyl-tRNA synthetase family. In terms of assembly, monomer. Zn(2+) is required as a cofactor.

The protein localises to the cytoplasm. The catalysed reaction is tRNA(Cys) + L-cysteine + ATP = L-cysteinyl-tRNA(Cys) + AMP + diphosphate. The sequence is that of Cysteine--tRNA ligase from Thermodesulfovibrio yellowstonii (strain ATCC 51303 / DSM 11347 / YP87).